The chain runs to 339 residues: Heat-inducible transcription repressor HrcA (339 aa).

The protein belongs to the HrcA family.

Its function is as follows. Negative regulator of class I heat shock genes (grpE-dnaK-dnaJ and groELS operons). Prevents heat-shock induction of these operons. This chain is Heat-inducible transcription repressor HrcA, found in Methylobacillus flagellatus (strain ATCC 51484 / DSM 6875 / VKM B-1610 / KT).